The sequence spans 145 residues: Ribonuclease H (145 aa).

In terms of domain architecture, RNase H type-1 spans 1-142 (MDTPVYLYTD…ADDLANRGAA (142 aa)). 4 residues coordinate Mg(2+): Asp10, Glu48, Asp70, and Asp134.

It belongs to the RNase H family. Monomer. It depends on Mg(2+) as a cofactor.

Its subcellular location is the cytoplasm. The catalysed reaction is Endonucleolytic cleavage to 5'-phosphomonoester.. In terms of biological role, endonuclease that specifically degrades the RNA of RNA-DNA hybrids. The polypeptide is Ribonuclease H (Neisseria gonorrhoeae (strain ATCC 700825 / FA 1090)).